Here is a 199-residue protein sequence, read N- to C-terminus: Large ribosomal subunit protein uL13A (199 aa).

Ser-2 carries the post-translational modification N-acetylserine. Lys-177 is covalently cross-linked (Glycyl lysine isopeptide (Lys-Gly) (interchain with G-Cter in ubiquitin)).

This sequence belongs to the universal ribosomal protein uL13 family. As to quaternary structure, component of the large ribosomal subunit (LSU). Mature yeast ribosomes consist of a small (40S) and a large (60S) subunit. The 40S small subunit contains 1 molecule of ribosomal RNA (18S rRNA) and 33 different proteins (encoded by 57 genes). The large 60S subunit contains 3 rRNA molecules (25S, 5.8S and 5S rRNA) and 46 different proteins (encoded by 81 genes). In terms of processing, N-terminally acetylated by acetyltransferase NatA.

It localises to the cytoplasm. Component of the ribosome, a large ribonucleoprotein complex responsible for the synthesis of proteins in the cell. The small ribosomal subunit (SSU) binds messenger RNAs (mRNAs) and translates the encoded message by selecting cognate aminoacyl-transfer RNA (tRNA) molecules. The large subunit (LSU) contains the ribosomal catalytic site termed the peptidyl transferase center (PTC), which catalyzes the formation of peptide bonds, thereby polymerizing the amino acids delivered by tRNAs into a polypeptide chain. The nascent polypeptides leave the ribosome through a tunnel in the LSU and interact with protein factors that function in enzymatic processing, targeting, and the membrane insertion of nascent chains at the exit of the ribosomal tunnel. The protein is Large ribosomal subunit protein uL13A of Saccharomyces cerevisiae (strain ATCC 204508 / S288c) (Baker's yeast).